A 245-amino-acid chain; its full sequence is 1-(5-phosphoribosyl)-5-[(5-phosphoribosylamino)methylideneamino] imidazole-4-carboxamide isomerase (245 aa).

Asp-11 acts as the Proton acceptor in catalysis. Asp-132 functions as the Proton donor in the catalytic mechanism.

This sequence belongs to the HisA/HisF family.

It localises to the cytoplasm. The catalysed reaction is 1-(5-phospho-beta-D-ribosyl)-5-[(5-phospho-beta-D-ribosylamino)methylideneamino]imidazole-4-carboxamide = 5-[(5-phospho-1-deoxy-D-ribulos-1-ylimino)methylamino]-1-(5-phospho-beta-D-ribosyl)imidazole-4-carboxamide. It functions in the pathway amino-acid biosynthesis; L-histidine biosynthesis; L-histidine from 5-phospho-alpha-D-ribose 1-diphosphate: step 4/9. The polypeptide is 1-(5-phosphoribosyl)-5-[(5-phosphoribosylamino)methylideneamino] imidazole-4-carboxamide isomerase (Xanthobacter autotrophicus (strain ATCC BAA-1158 / Py2)).